We begin with the raw amino-acid sequence, 506 residues long: Proline--tRNA ligase (506 aa).

The protein belongs to the class-II aminoacyl-tRNA synthetase family. ProS type 3 subfamily. As to quaternary structure, homodimer.

The protein localises to the cytoplasm. The catalysed reaction is tRNA(Pro) + L-proline + ATP = L-prolyl-tRNA(Pro) + AMP + diphosphate. Functionally, catalyzes the attachment of proline to tRNA(Pro) in a two-step reaction: proline is first activated by ATP to form Pro-AMP and then transferred to the acceptor end of tRNA(Pro). In Rhodopirellula baltica (strain DSM 10527 / NCIMB 13988 / SH1), this protein is Proline--tRNA ligase.